The primary structure comprises 309 residues: Tagatose-6-phosphate kinase (309 aa).

The protein belongs to the carbohydrate kinase PfkB family. LacC subfamily.

It catalyses the reaction D-tagatofuranose 6-phosphate + ATP = D-tagatofuranose 1,6-bisphosphate + ADP + H(+). Its pathway is carbohydrate metabolism; D-tagatose 6-phosphate degradation; D-glyceraldehyde 3-phosphate and glycerone phosphate from D-tagatose 6-phosphate: step 1/2. This chain is Tagatose-6-phosphate kinase, found in Streptococcus pneumoniae (strain ATCC 700669 / Spain 23F-1).